Consider the following 206-residue polypeptide: Large ribosomal subunit protein uL4 (206 aa).

The segment at 43–78 (ARSGNRKQKDREEVKHTTKKPWRQKGTGRARAGMSS) is disordered. Over residues 49–58 (KQKDREEVKH) the composition is skewed to basic and acidic residues. Positions 59 to 70 (TTKKPWRQKGTG) are enriched in basic residues.

It belongs to the universal ribosomal protein uL4 family. As to quaternary structure, part of the 50S ribosomal subunit.

Functionally, one of the primary rRNA binding proteins, this protein initially binds near the 5'-end of the 23S rRNA. It is important during the early stages of 50S assembly. It makes multiple contacts with different domains of the 23S rRNA in the assembled 50S subunit and ribosome. Its function is as follows. Forms part of the polypeptide exit tunnel. The polypeptide is Large ribosomal subunit protein uL4 (Ralstonia nicotianae (strain ATCC BAA-1114 / GMI1000) (Ralstonia solanacearum)).